A 225-amino-acid polypeptide reads, in one-letter code: Cytidylate kinase (225 aa).

11–19 (GPAAAGKST) serves as a coordination point for ATP.

It belongs to the cytidylate kinase family. Type 1 subfamily.

It localises to the cytoplasm. The catalysed reaction is CMP + ATP = CDP + ADP. The enzyme catalyses dCMP + ATP = dCDP + ADP. The protein is Cytidylate kinase of Bacillus cereus (strain AH187).